The chain runs to 200 residues: Riboflavin synthase (200 aa).

Lumazine-binding repeat units lie at residues Met-1–His-97 and Leu-98–Val-190. 2,4-dihydroxypteridine contacts are provided by residues Gly-4 to Ile-6, Cys-48 to Thr-50, Asp-62 to Thr-67, Gly-101 to Val-103, Lys-132, Ser-141 to Thr-143, and Gly-155 to Thr-160.

In terms of assembly, homotrimer.

It carries out the reaction 2 6,7-dimethyl-8-(1-D-ribityl)lumazine + H(+) = 5-amino-6-(D-ribitylamino)uracil + riboflavin. The protein operates within cofactor biosynthesis; riboflavin biosynthesis; riboflavin from 2-hydroxy-3-oxobutyl phosphate and 5-amino-6-(D-ribitylamino)uracil: step 2/2. Its function is as follows. Catalyzes the dismutation of two molecules of 6,7-dimethyl-8-ribityllumazine, resulting in the formation of riboflavin and 5-amino-6-(D-ribitylamino)uracil. This is Riboflavin synthase (ribE) from Chlamydia pneumoniae (Chlamydophila pneumoniae).